The primary structure comprises 502 residues: Glycerol kinase (502 aa).

T14 contributes to the ADP binding site. ATP is bound by residues T14, T15, and S16. T14 serves as a coordination point for sn-glycerol 3-phosphate. Position 18 (R18) interacts with ADP. Sn-glycerol 3-phosphate is bound by residues R84, E85, Y136, and D246. Glycerol is bound by residues R84, E85, Y136, D246, and Q247. T268 and G311 together coordinate ADP. T268, G311, Q315, and G412 together coordinate ATP. Residues G412 and N416 each contribute to the ADP site.

Belongs to the FGGY kinase family. In terms of assembly, homotetramer and homodimer (in equilibrium). Heterodimer with EIIA-Glc. Binds 1 zinc ion per glycerol kinase EIIA-Glc dimer. The zinc ion is important for dimerization.

The catalysed reaction is glycerol + ATP = sn-glycerol 3-phosphate + ADP + H(+). Its pathway is polyol metabolism; glycerol degradation via glycerol kinase pathway; sn-glycerol 3-phosphate from glycerol: step 1/1. Its activity is regulated as follows. Activity of this regulatory enzyme is affected by several metabolites. Allosterically and non-competitively inhibited by fructose 1,6-bisphosphate (FBP) and unphosphorylated phosphocarrier protein EIIA-Glc (III-Glc), an integral component of the bacterial phosphotransferase (PTS) system. Its function is as follows. Key enzyme in the regulation of glycerol uptake and metabolism. Catalyzes the phosphorylation of glycerol to yield sn-glycerol 3-phosphate. This is Glycerol kinase from Escherichia coli O127:H6 (strain E2348/69 / EPEC).